A 613-amino-acid polypeptide reads, in one-letter code: tRNA 5-methylaminomethyl-2-thiouridine biosynthesis bifunctional protein MnmC (613 aa).

The segment at 1–225 (MKKAKLIFKD…KREMIKAYLE (225 aa)) is tRNA (mnm(5)s(2)U34)-methyltransferase. The segment at 252 to 613 (IGAGISSAVL…FLVRKLKKGL (362 aa)) is FAD-dependent cmnm(5)s(2)U34 oxidoreductase.

In the N-terminal section; belongs to the methyltransferase superfamily. tRNA (mnm(5)s(2)U34)-methyltransferase family. This sequence in the C-terminal section; belongs to the DAO family. The cofactor is FAD.

The protein resides in the cytoplasm. The enzyme catalyses 5-aminomethyl-2-thiouridine(34) in tRNA + S-adenosyl-L-methionine = 5-methylaminomethyl-2-thiouridine(34) in tRNA + S-adenosyl-L-homocysteine + H(+). Its function is as follows. Catalyzes the last two steps in the biosynthesis of 5-methylaminomethyl-2-thiouridine (mnm(5)s(2)U) at the wobble position (U34) in tRNA. Catalyzes the FAD-dependent demodification of cmnm(5)s(2)U34 to nm(5)s(2)U34, followed by the transfer of a methyl group from S-adenosyl-L-methionine to nm(5)s(2)U34, to form mnm(5)s(2)U34. This Campylobacter jejuni subsp. doylei (strain ATCC BAA-1458 / RM4099 / 269.97) protein is tRNA 5-methylaminomethyl-2-thiouridine biosynthesis bifunctional protein MnmC.